Here is a 405-residue protein sequence, read N- to C-terminus: Nicotinate phosphoribosyltransferase (405 aa).

At His230 the chain carries Phosphohistidine; by autocatalysis.

Belongs to the NAPRTase family. Post-translationally, transiently phosphorylated on a His residue during the reaction cycle. Phosphorylation strongly increases the affinity for substrates and increases the rate of nicotinate D-ribonucleotide production. Dephosphorylation regenerates the low-affinity form of the enzyme, leading to product release.

The catalysed reaction is nicotinate + 5-phospho-alpha-D-ribose 1-diphosphate + ATP + H2O = nicotinate beta-D-ribonucleotide + ADP + phosphate + diphosphate. It functions in the pathway cofactor biosynthesis; NAD(+) biosynthesis; nicotinate D-ribonucleotide from nicotinate: step 1/1. Catalyzes the synthesis of beta-nicotinate D-ribonucleotide from nicotinate and 5-phospho-D-ribose 1-phosphate at the expense of ATP. The chain is Nicotinate phosphoribosyltransferase from Bordetella pertussis (strain Tohama I / ATCC BAA-589 / NCTC 13251).